The sequence spans 562 residues: Serine palmitoyltransferase 2 (562 aa).

Residues 67 to 87 (PMLVAVLTYVGYGVLTLFGYL) form a helical membrane-spanning segment. The residue at position 379 (lysine 379) is an N6-(pyridoxal phosphate)lysine.

Belongs to the class-II pyridoxal-phosphate-dependent aminotransferase family. Component of the serine palmitoyltransferase (SPT) complex, which is composed of SPTLC1, SPTLC2 or SPTLC3 and SPTSSA or SPTSSB. The heterodimer consisting of SPTLC1 and SPTLC2/SPTLC3 forms the catalytic core of the enzyme, while SPTSSA or SPTSSB subunits determine substrate specificity. SPT also interacts with ORMDL proteins, especially ORMDL3, which negatively regulate SPT activity in the presence of ceramides. Forms dimers of heterodimers with SPTLC1. It depends on pyridoxal 5'-phosphate as a cofactor. As to expression, widely expressed.

It is found in the endoplasmic reticulum membrane. It catalyses the reaction L-serine + hexadecanoyl-CoA + H(+) = 3-oxosphinganine + CO2 + CoA. The catalysed reaction is octadecanoyl-CoA + L-serine + H(+) = 3-oxoeicosasphinganine + CO2 + CoA. It functions in the pathway lipid metabolism; sphingolipid metabolism. SPT complex catalytic activity is negatively regulated by ORMDL proteins, including ORMDL3, in the presence of ceramides. This mechanism allows to maintain ceramide levels at sufficient concentrations for the production of complex sphingolipids, but which prevents the accumulation of ceramides to levels that trigger apoptosis. Component of the serine palmitoyltransferase multisubunit enzyme (SPT) that catalyzes the initial and rate-limiting step in sphingolipid biosynthesis by condensing L-serine and activated acyl-CoA (most commonly palmitoyl-CoA) to form long-chain bases. The SPT complex is composed of SPTLC1, SPTLC2 or SPTLC3 and SPTSSA or SPTSSB. Within this complex, the heterodimer consisting of SPTLC1 and SPTLC2/SPTLC3 forms the catalytic core. The composition of the serine palmitoyltransferase (SPT) complex determines the substrate preference. The SPTLC1-SPTLC2-SPTSSA complex shows a strong preference for C16-CoA substrate, while the SPTLC1-SPTLC3-SPTSSA isozyme uses both C14-CoA and C16-CoA as substrates, with a slight preference for C14-CoA. The SPTLC1-SPTLC2-SPTSSB complex shows a strong preference for C18-CoA substrate, while the SPTLC1-SPTLC3-SPTSSB isozyme displays an ability to use a broader range of acyl-CoAs, without apparent preference. Crucial for adipogenesis. This is Serine palmitoyltransferase 2 from Homo sapiens (Human).